The primary structure comprises 141 residues: Hemoglobin subunit alpha-A (141 aa).

The Globin domain occupies 1 to 141 (VLSAADKTNV…VGTVLTAKYR (141 aa)). His-58 serves as a coordination point for O2. Heme b is bound at residue His-87.

The protein belongs to the globin family. As to quaternary structure, heterotetramer of two alpha chains and two beta chains. Red blood cells.

Functionally, involved in oxygen transport from the lung to the various peripheral tissues. The polypeptide is Hemoglobin subunit alpha-A (HBAA) (Branta canadensis (Canada goose)).